The following is a 909-amino-acid chain: Protein translocase subunit SecA (909 aa).

ATP contacts are provided by residues Gln-85, 103–107 (GEGKT), and Asp-512. A disordered region spans residues 866-899 (HETSATGGEEEINKPVVKGKKIGRNDPCPCGSGK). Zn(2+) is bound by residues Cys-893, Cys-895, Cys-904, and Cys-905.

Belongs to the SecA family. As to quaternary structure, monomer and homodimer. Part of the essential Sec protein translocation apparatus which comprises SecA, SecYEG and auxiliary proteins SecDF. Other proteins may also be involved. The cofactor is Zn(2+).

It localises to the cell membrane. The protein localises to the cytoplasm. It carries out the reaction ATP + H2O + cellular proteinSide 1 = ADP + phosphate + cellular proteinSide 2.. Functionally, part of the Sec protein translocase complex. Interacts with the SecYEG preprotein conducting channel. Has a central role in coupling the hydrolysis of ATP to the transfer of proteins into and across the cell membrane, serving as an ATP-driven molecular motor driving the stepwise translocation of polypeptide chains across the membrane. In Finegoldia magna (strain ATCC 29328 / DSM 20472 / WAL 2508) (Peptostreptococcus magnus), this protein is Protein translocase subunit SecA.